A 423-amino-acid chain; its full sequence is UDP-N-acetylglucosamine 1-carboxyvinyltransferase (423 aa).

22-23 (KN) contacts phosphoenolpyruvate. Arg-93 serves as a coordination point for UDP-N-acetyl-alpha-D-glucosamine. Catalysis depends on Cys-117, which acts as the Proton donor. Cys-117 carries the post-translational modification 2-(S-cysteinyl)pyruvic acid O-phosphothioketal. UDP-N-acetyl-alpha-D-glucosamine is bound by residues 122-126 (RPVDL), Asp-308, and Val-330.

It belongs to the EPSP synthase family. MurA subfamily.

It localises to the cytoplasm. The enzyme catalyses phosphoenolpyruvate + UDP-N-acetyl-alpha-D-glucosamine = UDP-N-acetyl-3-O-(1-carboxyvinyl)-alpha-D-glucosamine + phosphate. Its pathway is cell wall biogenesis; peptidoglycan biosynthesis. In terms of biological role, cell wall formation. Adds enolpyruvyl to UDP-N-acetylglucosamine. This chain is UDP-N-acetylglucosamine 1-carboxyvinyltransferase, found in Finegoldia magna (strain ATCC 29328 / DSM 20472 / WAL 2508) (Peptostreptococcus magnus).